A 142-amino-acid chain; its full sequence is ATP synthase epsilon chain (142 aa).

This sequence belongs to the ATPase epsilon chain family. As to quaternary structure, F-type ATPases have 2 components, CF(1) - the catalytic core - and CF(0) - the membrane proton channel. CF(1) has five subunits: alpha(3), beta(3), gamma(1), delta(1), epsilon(1). CF(0) has three main subunits: a, b and c.

It localises to the cell inner membrane. Functionally, produces ATP from ADP in the presence of a proton gradient across the membrane. This Shewanella baltica (strain OS185) protein is ATP synthase epsilon chain.